Consider the following 801-residue polypeptide: H(+)/Cl(-) exchange transporter 3 (801 aa).

The Cytoplasmic segment spans residues 1 to 125 (MESEQLFHRG…WEMTKSLYDA (125 aa)). 3 short sequence motifs (di-leucine internalization motif; mediates targeting to late endosome and lysosome membranes) span residues 28 to 29 (LL), 46 to 47 (LL), and 71 to 75 (LLDLL). The helical transmembrane segment at 126–163 (WSGWLVVTLTGLASGALAGLIDIAADWMTDLKEGICLS) threads the bilayer. The N-linked (GlcNAc...) asparagine glycan is linked to N177. A helical membrane pass occupies residues 209–232 (MNYIMYIFWALSFAFLAVSLVKVF). Residues 238 to 242 (GSGIP) carry the Selectivity filter part_1 motif. S239 is a chloride binding site. An intramembrane region (helical) is located at residues 241–248 (IPEIKTIL). The next 2 membrane-spanning stretches (helical) occupy residues 258-276 (GKWT…VASG) and 282-301 (EGPL…YLFP). A Selectivity filter part_2 motif is present at residues 280-284 (GKEGP). 2 intramembrane regions (helical) span residues 313–325 (VLSA…VSVA) and 329–337 (PIGGVLFSL). The next 3 membrane-spanning stretches (helical) occupy residues 349–367 (LWRS…RSIN), 391–416 (FPFI…AWCR), and 423–443 (FGKY…VIAF). Residues N451 and N479 are each glycosylated (N-linked (GlcNAc...) asparagine). A helical transmembrane segment spans residues 500–520 (IWQLCLALIFKIIMTVFTFGI). Positions 525–529 (GLFIP) match the Selectivity filter part_3 motif. F527 lines the chloride pocket. 2 intramembrane regions (helical) span residues 555 to 569 (GLYA…LGGV) and 573 to 584 (TVSLVVIVFELT). An intramembrane region (note=Loop between two helices) is located at residues 585–588 (GGLE). A helical membrane pass occupies residues 589–607 (YIVPLMAAVMTSKWVGDAF). The Cytoplasmic portion of the chain corresponds to 608–801 (GREGIYEAHI…NQDPASIMFN (194 aa)). A chloride-binding site is contributed by Y613. CBS domains are found at residues 641 to 705 (MRPR…ARKK) and 738 to 795 (LDMS…NQDP). ATP is bound by residues 672–674 (YNG) and 779–782 (TKKD).

This sequence belongs to the chloride channel (TC 2.A.49) family. ClC-3/CLCN3 subfamily. As to quaternary structure, monomer and homodimer. Forms heterodimers with CLCN4. Post-translationally, N-glycosylated.

Its subcellular location is the early endosome membrane. It localises to the late endosome membrane. It is found in the lysosome membrane. The protein localises to the cell membrane. In terms of biological role, strongly outwardly rectifying, electrogenic H(+)/Cl(-)exchanger which mediates the exchange of chloride ions against protons. The CLC channel family contains both chloride channels and proton-coupled anion transporters that exchange chloride or another anion for protons. The presence of conserved gating glutamate residues is typical for family members that function as antiporters. This chain is H(+)/Cl(-) exchange transporter 3 (CLCN3), found in Pongo abelii (Sumatran orangutan).